The sequence spans 171 residues: Co-chaperone protein HscB (171 aa).

Residues 2–74 enclose the J domain; sequence DYFTLFGLPA…LTRAEYLLSL (73 aa).

Belongs to the HscB family. As to quaternary structure, interacts with HscA and stimulates its ATPase activity. Interacts with IscU.

Functionally, co-chaperone involved in the maturation of iron-sulfur cluster-containing proteins. Seems to help targeting proteins to be folded toward HscA. This chain is Co-chaperone protein HscB, found in Salmonella schwarzengrund (strain CVM19633).